Here is a 455-residue protein sequence, read N- to C-terminus: Chromosomal replication initiator protein DnaA (455 aa).

Residues 1–75 are domain I, interacts with DnaA modulators; sequence MDTNNNIEKE…EILSQNKVGM (75 aa). Positions 75–106 are domain II; it reads MHLAHSVDVRIEVAPKIQINAQANINYKAIKT. A domain III, AAA+ region region spans residues 107 to 321; the sequence is SVKDSYTFEN…GAIIKISVNA (215 aa). ATP-binding residues include G151, G153, K154, and T155. The segment at 322–455 is domain IV, binds dsDNA; it reads NLMNAPIDLN…DKKTAFNSSE (134 aa).

Belongs to the DnaA family. Oligomerizes as a right-handed, spiral filament on DNA at oriC.

It localises to the cytoplasm. Functionally, plays an essential role in the initiation and regulation of chromosomal replication. ATP-DnaA binds to the origin of replication (oriC) to initiate formation of the DNA replication initiation complex once per cell cycle. Binds the DnaA box (a 9 base pair repeat at the origin) and separates the double-stranded (ds)DNA. Forms a right-handed helical filament on oriC DNA; dsDNA binds to the exterior of the filament while single-stranded (ss)DNA is stabiized in the filament's interior. The ATP-DnaA-oriC complex binds and stabilizes one strand of the AT-rich DNA unwinding element (DUE), permitting loading of DNA polymerase. After initiation quickly degrades to an ADP-DnaA complex that is not apt for DNA replication. Binds acidic phospholipids. The polypeptide is Chromosomal replication initiator protein DnaA (Helicobacter pylori (strain P12)).